Consider the following 103-residue polypeptide: Stefin-2 (103 aa).

The Secondary area of contact signature appears at 52-56 (QVVQG).

The protein belongs to the cystatin family.

It localises to the cytoplasm. This is an intracellular thiol proteinase inhibitor. In Mus musculus (Mouse), this protein is Stefin-2 (Stfa2).